Here is a 136-residue protein sequence, read N- to C-terminus: Acyl carrier protein 1, chloroplastic (136 aa).

A chloroplast-targeting transit peptide spans 1–52; it reads MASVTGTSISMASFKASLAPSRVSNLRSVSLPIKGKSFAPLRMRSARFVVCC. The Carrier domain maps to 56–131; that stretch reads PETVEKVCAI…DAADLIEKLI (76 aa). Ser-91 carries the post-translational modification O-(pantetheine 4'-phosphoryl)serine.

It belongs to the acyl carrier protein (ACP) family. Post-translationally, 4'-phosphopantetheine is transferred from CoA to a specific serine of apo-ACP by acpS. This modification is essential for activity because fatty acids are bound in thioester linkage to the sulfhydryl of the prosthetic group.

It is found in the plastid. The protein resides in the chloroplast. It participates in lipid metabolism; fatty acid biosynthesis. Its function is as follows. Carrier of the growing fatty acid chain in fatty acid biosynthesis. The chain is Acyl carrier protein 1, chloroplastic (ACP1) from Casuarina glauca (Swamp oak).